Here is a 1190-residue protein sequence, read N- to C-terminus: DNA-directed RNA polymerase subunit beta (1190 aa).

The protein belongs to the RNA polymerase beta chain family. In terms of assembly, the RNAP catalytic core consists of 2 alpha, 1 beta, 1 beta' and 1 omega subunit. When a sigma factor is associated with the core the holoenzyme is formed, which can initiate transcription.

It carries out the reaction RNA(n) + a ribonucleoside 5'-triphosphate = RNA(n+1) + diphosphate. Functionally, DNA-dependent RNA polymerase catalyzes the transcription of DNA into RNA using the four ribonucleoside triphosphates as substrates. This chain is DNA-directed RNA polymerase subunit beta, found in Streptococcus suis (strain 98HAH33).